A 356-amino-acid polypeptide reads, in one-letter code: D-amino-acid oxidase (356 aa).

The first 17 residues, 1–17 (MAKIVVIGAGVAGLTTA), serve as a signal peptide directing secretion. FAD-binding residues include Ala9, Ser44, Gly48, and Asn50. Phe54 serves as a coordination point for anthranilate. Val171 provides a ligand contact to FAD. Residue Asn192 is glycosylated (N-linked (GlcNAc...) asparagine). Anthranilate is bound at residue Tyr243. Tyr243 lines the (R)-lactate pocket. A glycan (N-linked (GlcNAc...) asparagine) is linked at Asn262. Residues Arg302, Ala329, Gly332, Tyr333, and Gln334 each contribute to the FAD site. Arg302 contacts anthranilate. Position 302 (Arg302) interacts with (R)-lactate.

This sequence belongs to the DAMOX/DASOX family. Requires FAD as cofactor.

Its subcellular location is the peroxisome matrix. It carries out the reaction a D-alpha-amino acid + O2 + H2O = a 2-oxocarboxylate + H2O2 + NH4(+). It catalyses the reaction D-alanine + O2 + H2O = pyruvate + H2O2 + NH4(+). The enzyme catalyses D-serine + O2 + H2O = 3-hydroxypyruvate + H2O2 + NH4(+). The catalysed reaction is D-phenylalanine + O2 + H2O = 3-phenylpyruvate + H2O2 + NH4(+). It carries out the reaction D-lysine + O2 + H2O = 6-amino-2-oxohexanoate + H2O2 + NH4(+). It catalyses the reaction D-tyrosine + O2 + H2O = 3-(4-hydroxyphenyl)pyruvate + H2O2 + NH4(+). The enzyme catalyses D-methionine + O2 + H2O = 4-methylsulfanyl-2-oxobutanoate + H2O2 + NH4(+). The catalysed reaction is D-tryptophan + O2 + H2O = indole-3-pyruvate + H2O2 + NH4(+). It carries out the reaction D-leucine + O2 + H2O = 4-methyl-2-oxopentanoate + H2O2 + NH4(+). It catalyses the reaction D-valine + O2 + H2O = 3-methyl-2-oxobutanoate + H2O2 + NH4(+). With respect to regulation, inhibited by benzoate and hypochlorite. In terms of biological role, catalyzes the oxidative deamination of D-amino acids with broad substrate specificity. Enables the organism to utilize D-amino acids as a source of nutrients. This chain is D-amino-acid oxidase, found in Trigonopsis variabilis (Yeast).